A 453-amino-acid polypeptide reads, in one-letter code: Allantoinase (453 aa).

6 residues coordinate Zn(2+): H59, H61, K146, H186, H242, and D315. At K146 the chain carries N6-carboxylysine.

It belongs to the metallo-dependent hydrolases superfamily. Allantoinase family. As to quaternary structure, homotetramer. It depends on Zn(2+) as a cofactor. Post-translationally, carboxylation allows a single lysine to coordinate two zinc ions.

The catalysed reaction is (S)-allantoin + H2O = allantoate + H(+). The protein operates within nitrogen metabolism; (S)-allantoin degradation; allantoate from (S)-allantoin: step 1/1. Catalyzes the conversion of allantoin (5-ureidohydantoin) to allantoic acid by hydrolytic cleavage of the five-member hydantoin ring. This chain is Allantoinase, found in Salmonella choleraesuis (strain SC-B67).